Reading from the N-terminus, the 338-residue chain is 1-aminocyclopropane-1-carboxylate deaminase (338 aa).

The residue at position 51 (Lys51) is an N6-(pyridoxal phosphate)lysine. Ser78 functions as the Nucleophile in the catalytic mechanism.

The protein belongs to the ACC deaminase/D-cysteine desulfhydrase family. In terms of assembly, homotrimer. The cofactor is pyridoxal 5'-phosphate.

It catalyses the reaction 1-aminocyclopropane-1-carboxylate + H2O = 2-oxobutanoate + NH4(+). Functionally, catalyzes a cyclopropane ring-opening reaction, the irreversible conversion of 1-aminocyclopropane-1-carboxylate (ACC) to ammonia and alpha-ketobutyrate. Allows growth on ACC as a nitrogen source. The protein is 1-aminocyclopropane-1-carboxylate deaminase of Burkholderia pseudomallei (strain 1710b).